Reading from the N-terminus, the 455-residue chain is Immunoglobulin alpha-2 heavy chain (455 aa).

4 consecutive Ig-like domains span residues 1–95 (EVQL…VYYC), 121–213 (PKVF…QDVT), 227–322 (PRLS…ANIT), and 330–432 (PEVH…KTID). A variable (V) domain, involved in antigen recognition region spans residues 1–115 (EVQLVETGGG…GKGTTVTVSS (115 aa)). Disulfide bonds link Cys22-Cys95 and Cys141-Cys200. The constant (C) domain stretch occupies residues 116-455 (ASPTSPKVFP…VMAEADGTCY (340 aa)). Residues Asn162, Asn207, and Asn246 are each glycosylated (N-linked (GlcNAc...) asparagine). Cystine bridges form between Cys225/Cys282 and Cys249/Cys306. Asn320 carries N-linked (GlcNAc...) asparagine glycosylation. An intrachain disulfide couples Cys352 to Cys415. Asn442 is a glycosylation site (N-linked (GlcNAc...) asparagine).

Immunoglobulins are composed of two identical heavy chains and two identical light chains; disulfide-linked. Monomeric or polymeric.

It is found in the secreted. The protein localises to the cell membrane. Immunoglobulins, also known as antibodies, are membrane-bound or secreted glycoproteins produced by B lymphocytes. In the recognition phase of humoral immunity, the membrane-bound immunoglobulins serve as receptors which, upon binding of a specific antigen, trigger the clonal expansion and differentiation of B lymphocytes into immunoglobulins-secreting plasma cells. Secreted immunoglobulins mediate the effector phase of humoral immunity, which results in the elimination of bound antigens. The antigen binding site is formed by the variable domain of one heavy chain, together with that of its associated light chain. Thus, each immunoglobulin has two antigen binding sites with remarkable affinity for a particular antigen. The variable domains are assembled by a process called V-(D)-J rearrangement and can then be subjected to somatic hypermutations which, after exposure to antigen and selection, allow affinity maturation for a particular antigen. Ig alpha is the major immunoglobulin class in body secretions. This chain is Immunoglobulin alpha-2 heavy chain, found in Homo sapiens (Human).